We begin with the raw amino-acid sequence, 391 residues long: UDP-N-acetylglucosamine--N-acetylmuramyl-(pentapeptide) pyrophosphoryl-undecaprenol N-acetylglucosamine transferase (391 aa).

UDP-N-acetyl-alpha-D-glucosamine contacts are provided by residues threonine 11 to glycine 13, arginine 176, serine 206, and glutamine 312.

It belongs to the glycosyltransferase 28 family. MurG subfamily.

The protein localises to the cell inner membrane. It catalyses the reaction di-trans,octa-cis-undecaprenyl diphospho-N-acetyl-alpha-D-muramoyl-L-alanyl-D-glutamyl-meso-2,6-diaminopimeloyl-D-alanyl-D-alanine + UDP-N-acetyl-alpha-D-glucosamine = di-trans,octa-cis-undecaprenyl diphospho-[N-acetyl-alpha-D-glucosaminyl-(1-&gt;4)]-N-acetyl-alpha-D-muramoyl-L-alanyl-D-glutamyl-meso-2,6-diaminopimeloyl-D-alanyl-D-alanine + UDP + H(+). The protein operates within cell wall biogenesis; peptidoglycan biosynthesis. Cell wall formation. Catalyzes the transfer of a GlcNAc subunit on undecaprenyl-pyrophosphoryl-MurNAc-pentapeptide (lipid intermediate I) to form undecaprenyl-pyrophosphoryl-MurNAc-(pentapeptide)GlcNAc (lipid intermediate II). This Treponema denticola (strain ATCC 35405 / DSM 14222 / CIP 103919 / JCM 8153 / KCTC 15104) protein is UDP-N-acetylglucosamine--N-acetylmuramyl-(pentapeptide) pyrophosphoryl-undecaprenol N-acetylglucosamine transferase.